An 89-amino-acid polypeptide reads, in one-letter code: Antitoxin RelB (89 aa).

It belongs to the phD/YefM antitoxin family. In terms of assembly, interacts with toxin RelE, which neutralizes its toxicity. Also interacts with toxins RelG and RelK in vitro, in M.smegmatis coexpression with non-cognate toxins neutralizes the toxicity of RelG while increasing the toxicity of RelK.

In terms of biological role, antitoxin component of a type II toxin-antitoxin (TA) system. Upon expression in M.smegmatis neutralizes the effect of toxin RelE. Induces its own promoter, in combination with RelE represses its own promoter. Binds DNA in complex with toxin RelE but not alone. In Mycobacterium tuberculosis (strain ATCC 25618 / H37Rv), this protein is Antitoxin RelB (relB).